The primary structure comprises 723 residues: Methionine--tRNA ligase (723 aa).

Positions Pro12 to His22 match the 'HIGH' region motif. Residues Cys143, Cys146, Cys156, and Cys159 each coordinate Zn(2+). The short motif at Lys345–Ser349 is the 'KMSKS' region element. Lys348 is a binding site for ATP. The tract at residues Pro568–Ala604 is disordered. The tRNA-binding domain maps to Asp612–Lys723.

It belongs to the class-I aminoacyl-tRNA synthetase family. MetG type 1 subfamily. Homodimer. Requires Zn(2+) as cofactor.

The protein resides in the cytoplasm. The enzyme catalyses tRNA(Met) + L-methionine + ATP = L-methionyl-tRNA(Met) + AMP + diphosphate. In terms of biological role, is required not only for elongation of protein synthesis but also for the initiation of all mRNA translation through initiator tRNA(fMet) aminoacylation. This Azoarcus sp. (strain BH72) protein is Methionine--tRNA ligase.